Consider the following 281-residue polypeptide: Cytochrome c oxidase subunit 3 (281 aa).

The next 7 helical transmembrane spans lie at 34-54, 59-79, 103-123, 148-168, 179-199, 220-240, and 259-279; these read PWPI…VMTF, NGLF…TLWF, GFVL…WAFF, WEVP…VTYA, VIYG…FQGF, ATGF…VGLF, and ILYW…VYWW.

It belongs to the cytochrome c oxidase subunit 3 family. As to quaternary structure, component of the cytochrome c oxidase (complex IV, CIV), a multisubunit enzyme composed of a catalytic core of 3 subunits and several supernumerary subunits. The complex exists as a monomer or a dimer and forms supercomplexes (SCs) in the inner mitochondrial membrane with ubiquinol-cytochrome c oxidoreductase (cytochrome b-c1 complex, complex III, CIII).

Its subcellular location is the mitochondrion inner membrane. It carries out the reaction 4 Fe(II)-[cytochrome c] + O2 + 8 H(+)(in) = 4 Fe(III)-[cytochrome c] + 2 H2O + 4 H(+)(out). Its function is as follows. Component of the cytochrome c oxidase, the last enzyme in the mitochondrial electron transport chain which drives oxidative phosphorylation. The respiratory chain contains 3 multisubunit complexes succinate dehydrogenase (complex II, CII), ubiquinol-cytochrome c oxidoreductase (cytochrome b-c1 complex, complex III, CIII) and cytochrome c oxidase (complex IV, CIV), that cooperate to transfer electrons derived from NADH and succinate to molecular oxygen, creating an electrochemical gradient over the inner membrane that drives transmembrane transport and the ATP synthase. Cytochrome c oxidase is the component of the respiratory chain that catalyzes the reduction of oxygen to water. Electrons originating from reduced cytochrome c in the intermembrane space (IMS) are transferred via the dinuclear copper A center (CU(A)) of subunit 2 and heme A of subunit 1 to the active site in subunit 1, a binuclear center (BNC) formed by heme A3 and copper B (CU(B)). The BNC reduces molecular oxygen to 2 water molecules using 4 electrons from cytochrome c in the IMS and 4 protons from the mitochondrial matrix. The protein is Cytochrome c oxidase subunit 3 (COX3) of Rhizopus stolonifer (Rhizopus nigricans).